Reading from the N-terminus, the 366-residue chain is Septin-1 (366 aa).

The Septin-type G domain maps to 22–295 (KGFDFTLMVA…EGYRARCLQS (274 aa)). The segment at 32–39 (GESGLGKS) is G1 motif. GTP-binding positions include 32–39 (GESGLGKS), T66, G92, and 171–179 (KADALLPRE). Residues 89–92 (DTPG) are G3 motif. Residues 170–173 (GKAD) form a G4 motif region. S206 carries the post-translational modification Phosphoserine. GTP-binding residues include G229 and R244. A Phosphoserine; by AURKB modification is found at S247. At T250 the chain carries Phosphothreonine. A phosphoserine; by AURKB mark is found at S306 and S314. Residues 347 to 366 (EKMQAQMQQSQAQGEQSDVL) form a disordered region. The span at 349–366 (MQAQMQQSQAQGEQSDVL) shows a compositional bias: low complexity.

The protein belongs to the TRAFAC class TrmE-Era-EngA-EngB-Septin-like GTPase superfamily. Septin GTPase family. Septins polymerize into heterooligomeric protein complexes that form filaments, and can associate with cellular membranes, actin filaments and microtubules. GTPase activity is required for filament formation. Interacts with AURKB.

The protein resides in the cytoplasm. The protein localises to the cytoskeleton. It is found in the microtubule organizing center. Its subcellular location is the centrosome. It localises to the midbody. Functionally, filament-forming cytoskeletal GTPase. May play a role in cytokinesis (Potential). This chain is Septin-1, found in Rattus norvegicus (Rat).